Consider the following 157-residue polypeptide: MAPARAGCCPLLLLLLLLLGLWVAEVLVSAKPKDMTSSQWFKTQHVQPGPQACNSAISNINKYTERCKDLNTFLHEPFSSVAITCQTPNIACKNSCKNCHQSHGPMSLTMGELTSGKYPNCRYKEKHLNTPYMVACDPPQQGDPGYPLVPVHLDKVV.

Residues 1–30 (MAPARAGCCPLLLLLLLLLGLWVAEVLVSA) form the signal peptide. Catalysis depends on His45, which acts as the Proton acceptor. Intrachain disulfides connect Cys53/Cys96, Cys67/Cys121, Cys85/Cys136, and Cys92/Cys99. Substrate contacts are provided by residues 68 to 72 (KDLNT) and Lys93. The active-site Proton donor is His152.

It belongs to the pancreatic ribonuclease family.

Its subcellular location is the secreted. Has a low ribonuclease activity. In Pan troglodytes (Chimpanzee), this protein is Ribonuclease 8 (RNASE8).